The primary structure comprises 487 residues: Probable cobyric acid synthase (487 aa).

A GATase cobBQ-type domain is found at 246–431; sequence LVRIAVIRLP…LHGLFMVPAA (186 aa). The active-site Nucleophile is Cys325. The active site involves His423.

It belongs to the CobB/CobQ family. CobQ subfamily.

It participates in cofactor biosynthesis; adenosylcobalamin biosynthesis. Its function is as follows. Catalyzes amidations at positions B, D, E, and G on adenosylcobyrinic A,C-diamide. NH(2) groups are provided by glutamine, and one molecule of ATP is hydrogenolyzed for each amidation. The sequence is that of Probable cobyric acid synthase from Methanosphaerula palustris (strain ATCC BAA-1556 / DSM 19958 / E1-9c).